Consider the following 241-residue polypeptide: MATVSMRDMLKAGVHFGHQTRYWNPKMKPFIFGARNKVHIINLEKTVPMFNEALAELNKIASRKGKILFVGTKRAASEAVKDAALSCDQFFVNHRWLGGMLTNWKTVRQSIKRLKDLETQSQDGTFEKLTKKEALMRTRELEKLENSLGGIKDMGGLPDALFVIDADHEHIAIKEANNLGIPVFAIVDTNSDPDGVDFVIPGNDDAIRAVTLYLGAVAATVREGRSQDLASQAEESFVEAE.

It belongs to the universal ribosomal protein uS2 family.

In Escherichia coli (strain 55989 / EAEC), this protein is Small ribosomal subunit protein uS2.